We begin with the raw amino-acid sequence, 123 residues long: Protein Wnt-3a (123 aa).

S1 carries O-palmitoleoyl serine lipidation. C89 and C104 are joined by a disulfide. N90 carries an N-linked (GlcNAc...) asparagine glycan.

The protein belongs to the Wnt family. In terms of processing, disulfide bonds have critical and distinct roles in secretion and activity. Loss of each conserved cysteine results in high molecular weight oxidized Wnt oligomers, which are formed through inter-Wnt disulfide bonding. Palmitoleoylation is required for efficient binding to frizzled receptors. Depalmitoleoylation leads to Wnt signaling pathway inhibition.

The protein localises to the secreted. Its subcellular location is the extracellular space. It is found in the extracellular matrix. Its function is as follows. Ligand for members of the frizzled family of seven transmembrane receptors. Functions in the canonical Wnt signaling pathway that results in activation of transcription factors of the TCF/LEF family. Required for normal embryonic mesoderm development and formation of caudal somites. Required for normal morphogenesis of the developing neural tube. This is Protein Wnt-3a (WNT-3A) from Plethodon jordani (Red-cheeked salamander).